A 613-amino-acid polypeptide reads, in one-letter code: Phostensin (613 aa).

Over residues 15 to 33 the composition is skewed to basic and acidic residues; that stretch reads RRQEEASVRGREKAERERL. Disordered regions lie at residues 15 to 231 and 266 to 505; these read RRQE…SAYQ and GEER…GKKR. Ser-54, Ser-125, Ser-133, Ser-175, and Ser-195 each carry phosphoserine. 2 stretches are compositionally biased toward basic and acidic residues: residues 104 to 154 and 167 to 191; these read RSEE…ERRL and LEAR…EPWK. Residue Thr-199 is modified to Phosphothreonine. Residues 199-221 show a composition bias toward basic and acidic residues; the sequence is TPERSLRLAESREQSPRRKEVES. Ser-224 is modified (phosphoserine). Residues 266-282 show a composition bias toward basic and acidic residues; it reads GEERQGYSEKCGRKEEW. The span at 301-310 shows a compositional bias: polar residues; it reads REAQGSSSTG. 3 stretches are compositionally biased toward basic and acidic residues: residues 314 to 327, 340 to 350, and 357 to 367; these read AEQR…RGMK, KAREWTPRDIE, and EPSESAEKRLE. 2 positions are modified to phosphoserine: Ser-368 and Ser-432. Residues 424–446 are compositionally biased toward pro residues; the sequence is QPPPPAPLSPPPPAPTAPQPPGD. Lys-457 is modified (N6-acetyllysine). Residues 476–499 are compositionally biased toward low complexity; the sequence is PRRSVPPTTPATPTSPATADAAVP. Residues Ser-490 and Ser-530 each carry the phosphoserine modification. Residues 552 to 594 form a disordered region; that stretch reads QYPSESSVLEELGPEPEVPSAPNPPAAQPDDEEDEEELLLLQP. Positions 567–578 are enriched in pro residues; the sequence is PEVPSAPNPPAA. Residues 580 to 589 show a composition bias toward acidic residues; that stretch reads PDDEEDEEEL.

In terms of assembly, interacts with Protein phosphatase 1 (PP1).

Its subcellular location is the cytoplasm. The protein localises to the cytoskeleton. May target protein phosphatase 1 to F-actin cytoskeleton. The polypeptide is Phostensin (PPP1R18) (Macaca mulatta (Rhesus macaque)).